A 644-amino-acid polypeptide reads, in one-letter code: Prolyl 3,4-dihydroxylase TPA1 (644 aa).

The Fe2OG dioxygenase domain occupies 141 to 247 (SKTDMSINTY…RLSIQGWYHI (107 aa)). His-159 and Asp-161 together coordinate Fe cation. Tyr-173 lines the 2-oxoglutarate pocket. Position 227 (His-227) interacts with Fe cation. Arg-238 lines the 2-oxoglutarate pocket. Ser-607 carries the phosphoserine modification.

This sequence belongs to the TPA1 family. As to quaternary structure, monomer and homodimer. Interacts with FRK1, eRF1 (SUP1), eRF3 (SUP35) and polyadenylate-binding protein PAB1. Interacts with ETT1. Requires Fe(2+) as cofactor. L-ascorbate is required as a cofactor.

The protein resides in the nucleus. It carries out the reaction [ribosomal protein uS12]-L-proline + 2-oxoglutarate + O2 = [ribosomal protein uS12]-(3S)-3-hydroxy-L-proline + succinate + CO2. The enzyme catalyses [ribosomal protein uS12]-(3S)-3-hydroxy-L-proline + 2-oxoglutarate + O2 = [ribosomal protein uS12]-(3S)-3,4-dihydroxy-L-proline + succinate + CO2. In terms of biological role, prolyl 3,4-dihydroxylase that catalyzes 3,4-dihydroxylation of 'Pro-64' of small ribosomal subunit uS12 (RPS23A and RPS23B), thereby regulating protein translation termination efficiency. Part of a messenger ribonucleoprotein (mRNP) complex at the 3'-UTR of mRNAs. It associates specifically with components of the translation termination complex and is involved in both translation termination and in regulation of normal mRNA decay through translation termination-coupled poly(A) shortening. The chain is Prolyl 3,4-dihydroxylase TPA1 from Saccharomyces cerevisiae (strain ATCC 204508 / S288c) (Baker's yeast).